Here is a 290-residue protein sequence, read N- to C-terminus: Eukaryotic translation initiation factor 3 subunit F-2 (290 aa).

Positions 12 to 150 constitute an MPN domain; sequence VRLQPLVLFQ…TRLYCGVTMG (139 aa).

Belongs to the eIF-3 subunit F family. In terms of assembly, component of the eukaryotic translation initiation factor 3 (eIF-3) complex. The eIF-3 complex interacts with pix.

Its subcellular location is the cytoplasm. In terms of biological role, component of the eukaryotic translation initiation factor 3 (eIF-3) complex, which is involved in protein synthesis of a specialized repertoire of mRNAs and, together with other initiation factors, stimulates binding of mRNA and methionyl-tRNAi to the 40S ribosome. The eIF-3 complex specifically targets and initiates translation of a subset of mRNAs involved in cell proliferation. The polypeptide is Eukaryotic translation initiation factor 3 subunit F-2 (Drosophila virilis (Fruit fly)).